A 365-amino-acid chain; its full sequence is 3-dehydroquinate synthase (365 aa).

Residues 95-99 (GVVGD), 119-120 (TT), K132, and K141 each bind NAD(+). Zn(2+)-binding residues include E174, H238, and H255.

This sequence belongs to the sugar phosphate cyclases superfamily. Dehydroquinate synthase family. Requires Co(2+) as cofactor. The cofactor is Zn(2+). NAD(+) is required as a cofactor.

It localises to the cytoplasm. It carries out the reaction 7-phospho-2-dehydro-3-deoxy-D-arabino-heptonate = 3-dehydroquinate + phosphate. It participates in metabolic intermediate biosynthesis; chorismate biosynthesis; chorismate from D-erythrose 4-phosphate and phosphoenolpyruvate: step 2/7. Its function is as follows. Catalyzes the conversion of 3-deoxy-D-arabino-heptulosonate 7-phosphate (DAHP) to dehydroquinate (DHQ). This chain is 3-dehydroquinate synthase, found in Chlorobium chlorochromatii (strain CaD3).